The primary structure comprises 499 residues: Putative antiporter subunit mnhD2 (499 aa).

Transmembrane regions (helical) follow at residues Leu3 to Phe23, Tyr33 to Val53, Leu79 to Phe99, Tyr109 to Ser129, Leu131 to Leu151, Ile162 to Leu182, Ile210 to Leu230, Leu241 to Phe261, Ile272 to Ile292, Ile309 to Phe329, Leu331 to Ile351, Phe370 to Phe390, Gly404 to Phe424, and Ile452 to Asn472.

It belongs to the CPA3 antiporters (TC 2.A.63) subunit D family. In terms of assembly, may form a heterooligomeric complex that consists of seven subunits: mnhA2, mnhB2, mnhC2, mnhD2, mnhE2, mnhF2 and mnhG2.

The protein resides in the cell membrane. In terms of biological role, expression of the mnh2 operon in E.coli is not able to catalyze Na(+)Li(+)/H(+) antiport. It does however confer higher growth rates than the control strain at up to pH 9.5. The operon may encode an NADH-ubiquinone oxidoreductase. The polypeptide is Putative antiporter subunit mnhD2 (mnhD2) (Staphylococcus aureus).